We begin with the raw amino-acid sequence, 127 residues long: Cyclin-dependent kinase 2-associated protein 2 (127 aa).

Positions 1–49 are disordered; the sequence is MSYKPIAPAPSSTPGSSTPGPGTPVPTAGSVPSPSGSVPGAAGPFRPLF. Residues 9–44 show a composition bias toward low complexity; that stretch reads APSSTPGSSTPGPGTPVPTAGSVPSPSGSVPGAAGP. The interval 65 to 107 is interaction with CDK2; the sequence is PPGAQGSQSTYTDLLSVIEEMGKEIRPTYAGSKSAMERLKRGI.

Belongs to the CDK2AP family. Component of the nucleosome remodeling and deacetylase (NuRD) repressor complex, composed of core proteins MTA1, MTA2, MTA3, RBBP4, RBBP7, HDAC1, HDAC2, MBD2, MBD3, and peripherally associated proteins CDK2AP1, CDK2AP2, GATAD2A, GATAD2B, CHD3, CHD4 and CHD5. The exact stoichiometry of the NuRD complex is unknown, and some subunits such as MBD2 and MBD3, GATAD2A and GATAD2B, and CHD3, CHD4 and CHD5 define mutually exclusive NuRD complexes. Interacts with CDK2AP1. Interacts with CDK2. Interacts with MAPK1. In terms of processing, phosphorylated by MAPK1 and CDK2.

Its subcellular location is the cytoplasm. The protein localises to the nucleus. In terms of biological role, acts as a component of the histone deacetylase NuRD complex which participates in the remodeling of chromatin. Inhibits cell cycle G1/S phase transition by repressing CDK2 expression and activation; represses CDK2 activation by inhibiting its interaction with cyclin E and A. Plays a role in regulating the self-renewal of embryonic stem cells (ESCs) and in maintaining cell survival during terminal differentiation of ESCs. Regulates microtubule organization of metaphase II oocytes. This chain is Cyclin-dependent kinase 2-associated protein 2 (CDK2AP2), found in Bos taurus (Bovine).